Consider the following 644-residue polypeptide: DNA gyrase subunit B (644 aa).

One can recognise a Toprim domain in the interval Cys429–Pro543. 3 residues coordinate Mg(2+): Glu435, Asp508, and Asp510.

It belongs to the type II topoisomerase GyrB family. In terms of assembly, heterotetramer, composed of two GyrA and two GyrB chains. In the heterotetramer, GyrA contains the active site tyrosine that forms a transient covalent intermediate with DNA, while GyrB binds cofactors and catalyzes ATP hydrolysis. The cofactor is Mg(2+). It depends on Mn(2+) as a cofactor. Ca(2+) serves as cofactor.

The protein resides in the cytoplasm. It carries out the reaction ATP-dependent breakage, passage and rejoining of double-stranded DNA.. A type II topoisomerase that negatively supercoils closed circular double-stranded (ds) DNA in an ATP-dependent manner to modulate DNA topology and maintain chromosomes in an underwound state. Negative supercoiling favors strand separation, and DNA replication, transcription, recombination and repair, all of which involve strand separation. Also able to catalyze the interconversion of other topological isomers of dsDNA rings, including catenanes and knotted rings. Type II topoisomerases break and join 2 DNA strands simultaneously in an ATP-dependent manner. This is DNA gyrase subunit B from Staphylococcus aureus (strain COL).